Consider the following 79-residue polypeptide: ATP synthase subunit c (79 aa).

The next 2 membrane-spanning stretches (helical) occupy residues 10-30 (IAGA…IGVL) and 52-72 (FFIV…LAMY).

The protein belongs to the ATPase C chain family. F-type ATPases have 2 components, F(1) - the catalytic core - and F(0) - the membrane proton channel. F(1) has five subunits: alpha(3), beta(3), gamma(1), delta(1), epsilon(1). F(0) has three main subunits: a(1), b(2) and c(10-14). The alpha and beta chains form an alternating ring which encloses part of the gamma chain. F(1) is attached to F(0) by a central stalk formed by the gamma and epsilon chains, while a peripheral stalk is formed by the delta and b chains.

The protein resides in the cell inner membrane. Its function is as follows. F(1)F(0) ATP synthase produces ATP from ADP in the presence of a proton or sodium gradient. F-type ATPases consist of two structural domains, F(1) containing the extramembraneous catalytic core and F(0) containing the membrane proton channel, linked together by a central stalk and a peripheral stalk. During catalysis, ATP synthesis in the catalytic domain of F(1) is coupled via a rotary mechanism of the central stalk subunits to proton translocation. Key component of the F(0) channel; it plays a direct role in translocation across the membrane. A homomeric c-ring of between 10-14 subunits forms the central stalk rotor element with the F(1) delta and epsilon subunits. In Thiobacillus denitrificans (strain ATCC 25259 / T1), this protein is ATP synthase subunit c.